The chain runs to 164 residues: UPF0114 protein BCI_0033 (164 aa).

3 helical membrane passes run 15 to 35, 53 to 73, and 136 to 156; these read LLFP…LKFF, LILI…LVMV, and IMWC…MAYI.

It belongs to the UPF0114 family.

The protein resides in the cell membrane. In Baumannia cicadellinicola subsp. Homalodisca coagulata, this protein is UPF0114 protein BCI_0033.